The following is a 160-amino-acid chain: Cytochrome b6-f complex subunit 4 (160 aa).

The next 3 helical transmembrane spans lie at Leu-36 to Val-56, Leu-95 to Glu-115, and Thr-131 to Ile-151.

It belongs to the cytochrome b family. PetD subfamily. In terms of assembly, the 4 large subunits of the cytochrome b6-f complex are cytochrome b6, subunit IV (17 kDa polypeptide, petD), cytochrome f and the Rieske protein, while the 4 small subunits are petG, petL, petM and petN. The complex functions as a dimer.

The protein localises to the plastid. The protein resides in the chloroplast thylakoid membrane. Its function is as follows. Component of the cytochrome b6-f complex, which mediates electron transfer between photosystem II (PSII) and photosystem I (PSI), cyclic electron flow around PSI, and state transitions. The sequence is that of Cytochrome b6-f complex subunit 4 from Gossypium barbadense (Sea Island cotton).